A 590-amino-acid chain; its full sequence is V-type ATP synthase alpha chain (590 aa).

Residue 232-239 (GPFGSGKT) participates in ATP binding.

It belongs to the ATPase alpha/beta chains family.

It catalyses the reaction ATP + H2O + 4 H(+)(in) = ADP + phosphate + 5 H(+)(out). Its function is as follows. Produces ATP from ADP in the presence of a proton gradient across the membrane. The V-type alpha chain is a catalytic subunit. This Thermoanaerobacter sp. (strain X514) protein is V-type ATP synthase alpha chain.